A 246-amino-acid chain; its full sequence is 5'-nucleotidase SurE (246 aa).

Aspartate 8, aspartate 9, serine 39, and asparagine 91 together coordinate a divalent metal cation.

The protein belongs to the SurE nucleotidase family. It depends on a divalent metal cation as a cofactor.

It is found in the cytoplasm. It catalyses the reaction a ribonucleoside 5'-phosphate + H2O = a ribonucleoside + phosphate. Functionally, nucleotidase that shows phosphatase activity on nucleoside 5'-monophosphates. The sequence is that of 5'-nucleotidase SurE from Mannheimia succiniciproducens (strain KCTC 0769BP / MBEL55E).